We begin with the raw amino-acid sequence, 565 residues long: FAD-linked oxidoreductase ZEB1 (565 aa).

A signal peptide spans 1 to 27; that stretch reads MKLSPSKYLPVLLGTLSLTIANPSADC. N-linked (GlcNAc...) asparagine glycans are attached at residues Asn-46, Asn-82, and Asn-100. An FAD-binding PCMH-type domain is found at 115–293; it reads LGNYVSYAIA…ISMTVKAHPG (179 aa). Asn-340, Asn-352, and Asn-421 each carry an N-linked (GlcNAc...) asparagine glycan.

This sequence belongs to the oxygen-dependent FAD-linked oxidoreductase family.

Its pathway is mycotoxin biosynthesis. Functionally, FAD-linked oxidoreductase; part of the gene cluster that mediates the biosynthesis of zearalenone (ZEA), a nonsteroid estrogen that is a contaminant of cereal grains and causes estrogenic disorders in humans and animals. The ZEA backbone is synthesized from a single acetyl-CoA molecule and eight malonyl-CoA molecules. The reducing polyketide synthase ZEA2 is proposed to synthesize a reduced hexaketide intermediate by using different combinations of its reductive domains during each round of condensation. The hexaketide thioester is then transacylated to the non-reducing polyketide synthase ZEA1 and is further condensed with three malonyl-CoAs without reductive tailoring to yield a mixed reduced/unreduced nonaketide. ZEA1 must be able to interact with ZEA2 to facilitate starter-unit acyltransfer and initiate polyketide biosynthesis. ZEA1 also mediates the required C2-C7 cyclization to form the resorcylate core and catalyzes the formation of the macrolactone. ZEB1 is then responsible for the chemical conversion of beta-zearalenonol (beta-ZOL) to ZEA in the biosynthetic pathway. This is FAD-linked oxidoreductase ZEB1 from Gibberella zeae (strain ATCC MYA-4620 / CBS 123657 / FGSC 9075 / NRRL 31084 / PH-1) (Wheat head blight fungus).